The following is a 369-amino-acid chain: 3-dehydroquinate synthase (369 aa).

NAD(+) is bound by residues 110-114 (GVIGD), 134-135 (TT), K147, K156, and 174-177 (TLKT). Zn(2+) contacts are provided by E189, H254, and H271.

Belongs to the sugar phosphate cyclases superfamily. Dehydroquinate synthase family. It depends on Co(2+) as a cofactor. Zn(2+) is required as a cofactor. The cofactor is NAD(+).

The protein localises to the cytoplasm. The enzyme catalyses 7-phospho-2-dehydro-3-deoxy-D-arabino-heptonate = 3-dehydroquinate + phosphate. Its pathway is metabolic intermediate biosynthesis; chorismate biosynthesis; chorismate from D-erythrose 4-phosphate and phosphoenolpyruvate: step 2/7. In terms of biological role, catalyzes the conversion of 3-deoxy-D-arabino-heptulosonate 7-phosphate (DAHP) to dehydroquinate (DHQ). This Cyanothece sp. (strain PCC 7425 / ATCC 29141) protein is 3-dehydroquinate synthase.